Consider the following 474-residue polypeptide: tRNA-2-methylthio-N(6)-dimethylallyladenosine synthase (474 aa).

The 118-residue stretch at 3-120 (KKLHIKTWGC…LPEMINSVRG (118 aa)) folds into the MTTase N-terminal domain. Residues Cys12, Cys49, Cys83, Cys157, Cys161, and Cys164 each contribute to the [4Fe-4S] cluster site. The region spanning 143–375 (RAEGPTAFVS…QERINQQAMA (233 aa)) is the Radical SAM core domain. The 64-residue stretch at 378 to 441 (RRMLGTTQRI…PNSLRGKVVR (64 aa)) folds into the TRAM domain.

The protein belongs to the methylthiotransferase family. MiaB subfamily. In terms of assembly, monomer. [4Fe-4S] cluster serves as cofactor.

The protein resides in the cytoplasm. It carries out the reaction N(6)-dimethylallyladenosine(37) in tRNA + (sulfur carrier)-SH + AH2 + 2 S-adenosyl-L-methionine = 2-methylsulfanyl-N(6)-dimethylallyladenosine(37) in tRNA + (sulfur carrier)-H + 5'-deoxyadenosine + L-methionine + A + S-adenosyl-L-homocysteine + 2 H(+). Catalyzes the methylthiolation of N6-(dimethylallyl)adenosine (i(6)A), leading to the formation of 2-methylthio-N6-(dimethylallyl)adenosine (ms(2)i(6)A) at position 37 in tRNAs that read codons beginning with uridine. This chain is tRNA-2-methylthio-N(6)-dimethylallyladenosine synthase, found in Escherichia coli (strain UTI89 / UPEC).